Reading from the N-terminus, the 392-residue chain is Stilbene synthase 1 (392 aa).

Residue 55-58 (KFNR) participates in substrate binding. Cys164 is an active-site residue. Substrate is bound by residues Leu267 and 305-307 (GGP).

The protein belongs to the thiolase-like superfamily. Chalcone/stilbene synthases family. Homodimer. As to expression, in leaves, expressed in palisade and spongy parenchyma cells and, to a lesser extent, in epidermal cells after induction.

It is found in the cytoplasm. The enzyme catalyses 4-coumaroyl-CoA + 3 malonyl-CoA + 3 H(+) = trans-resveratrol + 4 CO2 + 4 CoA. It functions in the pathway phytoalexin biosynthesis; 3,4',5-trihydroxystilbene biosynthesis; 3,4',5-trihydroxystilbene from trans-4-coumarate: step 2/2. In terms of biological role, mediates resistance to pathogens which are sensitive to stilbenes such as Botrytis cinerea, Eutypa lata and Plasmopora viticola by enhancing the production of phytoalexins. Confers resistance to Phytophthora palmivora when expressed in papaya. This chain is Stilbene synthase 1 (VINST1), found in Vitis vinifera (Grape).